Here is a 309-residue protein sequence, read N- to C-terminus: uncharacterized protein (309 aa).

Pro residues-rich tracts occupy residues 1–17 and 24–51; these read MTSR…PSPP and SPVP…PTPR. Disordered regions lie at residues 1–174 and 216–240; these read MTSR…PPGV and PPDL…PLHA. Low complexity predominate over residues 67–83; it reads LRSSPSSALNASRGAPS. Pro residues predominate over residues 84–112; it reads TSPPPSSSPPSSPASTPPSRTPSPTPTAP. Composition is skewed to low complexity over residues 113–125 and 135–144; these read ASPV…TPAS and APSSSAALSS. The span at 160–174 shows a compositional bias: pro residues; sequence PPPPLPPPLQPPPGV. A helical membrane pass occupies residues 278–298; it reads LFLLFTLLSIHFSPFPIFILL.

Its subcellular location is the host membrane. This is an uncharacterized protein from Vitis vinifera (Grape).